The primary structure comprises 159 residues: Growth arrest and DNA damage-inducible protein GADD45 gamma (159 aa).

Residues 43–86 (VYESAKVLNVDPDNVTFCVLAADEEDEGDIALQIHFTLIQAFCC) form a homodimerization region.

The protein belongs to the GADD45 family. In terms of assembly, undergoes concentration-dependent homodimerization, which is required for growth inhibititory activity and enhances interaction with PCNA. Interacts with GADD45GIP1. Interacts with PCNA.

In terms of biological role, involved in the regulation of growth and apoptosis. Mediates activation of stress-responsive MTK1/MEKK4 MAPKKK. This is Growth arrest and DNA damage-inducible protein GADD45 gamma (Gadd45g) from Rattus norvegicus (Rat).